Reading from the N-terminus, the 542-residue chain is Chaperonin GroEL (542 aa).

ATP-binding positions include 29-32 (TLGP), 86-90 (DGTTT), Gly-413, 476-478 (NAA), and Asp-492. The tract at residues 523 to 542 (EPAAPAMPGGMDPSMMGGMM) is disordered. Residues 526 to 542 (APAMPGGMDPSMMGGMM) are compositionally biased toward low complexity.

It belongs to the chaperonin (HSP60) family. In terms of assembly, forms a cylinder of 14 subunits composed of two heptameric rings stacked back-to-back. Interacts with the co-chaperonin GroES.

The protein resides in the cytoplasm. The enzyme catalyses ATP + H2O + a folded polypeptide = ADP + phosphate + an unfolded polypeptide.. Functionally, together with its co-chaperonin GroES, plays an essential role in assisting protein folding. The GroEL-GroES system forms a nano-cage that allows encapsulation of the non-native substrate proteins and provides a physical environment optimized to promote and accelerate protein folding. This Streptococcus uberis (strain ATCC BAA-854 / 0140J) protein is Chaperonin GroEL.